We begin with the raw amino-acid sequence, 290 residues long: Glycine--tRNA ligase alpha subunit (290 aa).

It belongs to the class-II aminoacyl-tRNA synthetase family. Tetramer of two alpha and two beta subunits.

Its subcellular location is the cytoplasm. It carries out the reaction tRNA(Gly) + glycine + ATP = glycyl-tRNA(Gly) + AMP + diphosphate. The chain is Glycine--tRNA ligase alpha subunit from Desulfotalea psychrophila (strain LSv54 / DSM 12343).